Consider the following 118-residue polypeptide: Large ribosomal subunit protein bL20 (118 aa).

This sequence belongs to the bacterial ribosomal protein bL20 family.

Functionally, binds directly to 23S ribosomal RNA and is necessary for the in vitro assembly process of the 50S ribosomal subunit. It is not involved in the protein synthesizing functions of that subunit. The chain is Large ribosomal subunit protein bL20 from Fervidobacterium nodosum (strain ATCC 35602 / DSM 5306 / Rt17-B1).